We begin with the raw amino-acid sequence, 195 residues long: Imidazoleglycerol-phosphate dehydratase (195 aa).

This sequence belongs to the imidazoleglycerol-phosphate dehydratase family.

It is found in the cytoplasm. It catalyses the reaction D-erythro-1-(imidazol-4-yl)glycerol 3-phosphate = 3-(imidazol-4-yl)-2-oxopropyl phosphate + H2O. It functions in the pathway amino-acid biosynthesis; L-histidine biosynthesis; L-histidine from 5-phospho-alpha-D-ribose 1-diphosphate: step 6/9. This Deinococcus radiodurans (strain ATCC 13939 / DSM 20539 / JCM 16871 / CCUG 27074 / LMG 4051 / NBRC 15346 / NCIMB 9279 / VKM B-1422 / R1) protein is Imidazoleglycerol-phosphate dehydratase.